The sequence spans 356 residues: S-adenosylmethionine:tRNA ribosyltransferase-isomerase (356 aa).

It belongs to the QueA family. In terms of assembly, monomer.

The protein resides in the cytoplasm. It catalyses the reaction 7-aminomethyl-7-carbaguanosine(34) in tRNA + S-adenosyl-L-methionine = epoxyqueuosine(34) in tRNA + adenine + L-methionine + 2 H(+). Its pathway is tRNA modification; tRNA-queuosine biosynthesis. In terms of biological role, transfers and isomerizes the ribose moiety from AdoMet to the 7-aminomethyl group of 7-deazaguanine (preQ1-tRNA) to give epoxyqueuosine (oQ-tRNA). The polypeptide is S-adenosylmethionine:tRNA ribosyltransferase-isomerase (Ralstonia nicotianae (strain ATCC BAA-1114 / GMI1000) (Ralstonia solanacearum)).